The chain runs to 152 residues: Putative pseudoazurin (152 aa).

The first 23 residues, Met1–Ala23, serve as a signal peptide directing secretion. Residues Val28–Gly116 form the Plastocyanin-like domain. Positions 63, 101, 104, and 109 each coordinate Cu cation.

Requires Cu cation as cofactor.

The protein resides in the periplasm. Functionally, this soluble electron transfer copper protein is required for the inactivation of copper-containing nitrite reductase in the presence of oxygen. The sequence is that of Putative pseudoazurin (azu) from Rhizobium leguminosarum bv. viciae.